The following is an 843-amino-acid chain: Respiratory burst oxidase homolog protein B (843 aa).

Over residues 1–10 (MREEEMESSS) the composition is skewed to acidic residues. The interval 1–27 (MREEEMESSSEGETNKISRCKATGSDN) is disordered. The Cytoplasmic portion of the chain corresponds to 1–297 (MREEEMESSS…SYFFLENWKR (297 aa)). EF-hand-like stretches follow at residues 114-122 (AVEGKLPKS) and 148-159 (RGTTSSSITKTE). EF-hand domains are found at residues 171–206 (SFDD…SASA) and 215–250 (NVDE…VPSQ). Ca(2+) contacts are provided by Asp-184, Asn-186, Asp-188, Arg-190, and Glu-195. Phosphoserine is present on Ser-268. A helical membrane pass occupies residues 298–318 (IWVLTLWISICITLFTWKFLQ). Over 319-383 (YKRKTVFEVM…FDDNINFHKV (65 aa)) the chain is Extracellular. A Ferric oxidoreductase domain is found at 336 to 495 (KGSAETLKFN…LFVIVYVLLI (160 aa)). A helical membrane pass occupies residues 384–404 (VAFGIAVGIGLHAISHLACDF). At 405 to 439 (PRLLHAKNVEFEPMKKFFGDERPENYGWFMKGTDG) the chain is on the cytoplasmic side. A helical membrane pass occupies residues 440 to 460 (WTGVTMVVLMLVAYVLAQSWF). The Extracellular portion of the chain corresponds to 461–482 (RRNRANLPKSLKRLTGFNAFWY). Residues 483–503 (SHHLFVIVYVLLIVHGYFVYL) form a helical membrane-spanning segment. Residues 504-511 (SKEWYHKT) are Cytoplasmic-facing. The chain crosses the membrane as a helical span at residues 512–529 (TWMYLAVPVLLYAFERLI). Topologically, residues 530-659 (RAFRPGAKAV…PYGAPAQDYR (130 aa)) are extracellular. The 124-residue stretch at 534–657 (PGAKAVKVLK…DGPYGAPAQD (124 aa)) folds into the FAD-binding FR-type domain. Residues 660 to 680 (NYDVLLLVGLGIGATPLISII) traverse the membrane as a helical segment. The Cytoplasmic segment spans residues 681–843 (RDVLNNIKNQ…TKFEFHKENF (163 aa)).

Belongs to the RBOH (TC 5.B.1.3) family. Monomer and homodimer.

Its subcellular location is the membrane. Calcium-dependent NADPH oxidase that generates superoxide. This Arabidopsis thaliana (Mouse-ear cress) protein is Respiratory burst oxidase homolog protein B (RBOHB).